The sequence spans 157 residues: Crossover junction endodeoxyribonuclease RuvC (157 aa).

Catalysis depends on residues Asp7, Glu67, and Asp139. Mg(2+) contacts are provided by Asp7, Glu67, and Asp139.

Belongs to the RuvC family. In terms of assembly, homodimer which binds Holliday junction (HJ) DNA. The HJ becomes 2-fold symmetrical on binding to RuvC with unstacked arms; it has a different conformation from HJ DNA in complex with RuvA. In the full resolvosome a probable DNA-RuvA(4)-RuvB(12)-RuvC(2) complex forms which resolves the HJ. Mg(2+) is required as a cofactor.

The protein localises to the cytoplasm. It carries out the reaction Endonucleolytic cleavage at a junction such as a reciprocal single-stranded crossover between two homologous DNA duplexes (Holliday junction).. Its function is as follows. The RuvA-RuvB-RuvC complex processes Holliday junction (HJ) DNA during genetic recombination and DNA repair. Endonuclease that resolves HJ intermediates. Cleaves cruciform DNA by making single-stranded nicks across the HJ at symmetrical positions within the homologous arms, yielding a 5'-phosphate and a 3'-hydroxyl group; requires a central core of homology in the junction. The consensus cleavage sequence is 5'-(A/T)TT(C/G)-3'. Cleavage occurs on the 3'-side of the TT dinucleotide at the point of strand exchange. HJ branch migration catalyzed by RuvA-RuvB allows RuvC to scan DNA until it finds its consensus sequence, where it cleaves and resolves the cruciform DNA. The chain is Crossover junction endodeoxyribonuclease RuvC from Prochlorococcus marinus (strain MIT 9301).